The chain runs to 102 residues: Putative ubiquitin-like protein FUBI-like protein ENSP00000310146 (102 aa).

One can recognise a Ubiquitin-like domain in the interval 23–99 (LCPQVAYVRA…LEVVGRRLGV (77 aa)).

The chain is Putative ubiquitin-like protein FUBI-like protein ENSP00000310146 from Homo sapiens (Human).